Here is a 91-residue protein sequence, read N- to C-terminus: uncharacterized protein (91 aa).

Transmembrane regions (helical) follow at residues 4 to 21 (YAII…LRRG), 28 to 50 (IIEV…SHAV), and 60 to 82 (VKAF…GTYL).

The protein resides in the cell membrane. This is an uncharacterized protein from Archaeoglobus fulgidus (strain ATCC 49558 / DSM 4304 / JCM 9628 / NBRC 100126 / VC-16).